The primary structure comprises 421 residues: EGFR adapter protein (421 aa).

Disordered stretches follow at residues 18–94 (TFIS…PQLQ), 109–154 (DVQE…RLVD), 173–194 (EDSRPLMHSTCGSSLTSGSGCG), and 372–396 (PVPLTLPRPPSTRSQRSQGAYAGGT). Positions 21–30 (SSSSASSSSS) are enriched in low complexity. Basic residues predominate over residues 62–89 (FFHHHHPPAHPHPPRQQPHPHSHSHPHP). Positions 109 to 120 (DVQELSGQEHPH) are enriched in basic and acidic residues. A compositionally biased stretch (low complexity) spans 181-194 (STCGSSLTSGSGCG). Residues 286-379 (WFQAGIPREI…LLPVPLTLPR (94 aa)) form the SH2 domain.

As to quaternary structure, may interact (via SH2 domain) with Egfr (when phosphorylated). As to expression, detected along the wing margin, with high levels of expression in two stripes of cells on either side of the dorsal/ventral boundary and lower levels of expression in a small region at the anteroposterior boundary (at protein level). High levels of expression along two parallel stripes of cells on either side of the wing pouch dorsal/ventral boundary, and slightly lower levels of expression in a region either side of the anteroposterior boundary. Also expressed in discrete regions of the wing imaginal disk outside of the pouch. Expressed in eye imaginal disk photoreceptors with highest levels of expression in R7 photoreceptor cells.

Involved in the negative regulation of the Egfr/Ras signaling pathway. During wing morphogenesis, may function redundantly with PVRAP to inhibit Egfr activity and prevent uncontrolled cell growth. This is EGFR adapter protein from Drosophila melanogaster (Fruit fly).